We begin with the raw amino-acid sequence, 321 residues long: tRNA uridine(34) hydroxylase (321 aa).

The 99-residue stretch at 135–233 folds into the Rhodanese domain; the sequence is DDPDTLVIDT…YLEQVPEEES (99 aa). The active-site Cysteine persulfide intermediate is the Cys193. The tract at residues 301–321 is disordered; that stretch reads RQRQMDQLSSASSKKSDDFSL.

The protein belongs to the TrhO family.

It catalyses the reaction uridine(34) in tRNA + AH2 + O2 = 5-hydroxyuridine(34) in tRNA + A + H2O. Its function is as follows. Catalyzes oxygen-dependent 5-hydroxyuridine (ho5U) modification at position 34 in tRNAs. The chain is tRNA uridine(34) hydroxylase from Parasynechococcus marenigrum (strain WH8102).